The sequence spans 868 residues: METRNKFMLLACATFSIMSLVKSQNQQGFISLDCGLPSKESYIEPSSNLTFISDVNFIRGGKTGNIQNNSRTNFIFKPFKVLRYFPDGIRNCYSLSVKQGTKYLIRTLFYYGNYDGLNTSPRFDLFLGPNIWTSVDVLIADVGDGVVEEIVHVTRSNILDICLVKTGTSTPMISAIELRPLRYDTYTARTGSLKSMAHFYFTNSDEAIRYPEDVYDRVWMPYSQPEWTQINTTRNVSGFSDGYNPPQGVIQTASIPTNGSEPLTFTWNLESSDDETYAYLFFAEIQQLKVNETREFKILANGVDYIDYTPWKFEARTLSNPAPLKCEGGVCRVQLSKTPKSTLPPLMNAIEIFSVIQFPQSDTNTDEVIAIKKIQSTYQLSRISWQGDPCVPKQFSWMGVSCNVIDISTPPRIISLDLSLSGLTGVISPSIQNLTMLRELDLSNNNLTGEVPEFLATIKPLLVIHLRGNNLRGSVPQALQDREKNDGLKLFVDPNITRRGKHQPKSWLVAIVASISCVAVTIIVLVLIFIFRRRKSSTRKVIRPSLEMKNRRFKYSEVKEMTNNFEVVLGKGGFGVVYHGFLNNEQVAVKVLSQSSTQGYKEFKTEVELLLRVHHVNLVSLVGYCDEGIDLALIYEFMENGNLKEHLSGKRGGSVLNWSSRLKIAIESALGIEYLHIGCQPPMVHRDVKSTNILLGLRFEAKLADFGLSRSFLVGSQAHVSTNVAGTLGYLDPEYYLKNWLTEKSDVYSFGIVLLESITGQPVIEQSRDKSYIVEWAKSMLANGDIESIMDPNLHQDYDSSSSWKALELAMLCINPSSTQRPNMTRVAHELNECLEIYNLTKIRSQDQNSSKSLGHTVTFISDIPSAR.

The N-terminal stretch at Met-1–Ser-23 is a signal peptide. The Extracellular segment spans residues Gln-24–Ala-510. Asn-48, Asn-68, Asn-231, Asn-235, Asn-258, Asn-291, Asn-433, and Asn-446 each carry an N-linked (GlcNAc...) asparagine glycan. 3 LRR repeats span residues Arg-412–Thr-435, Met-436–Ile-458, and Pro-460–Arg-482. A glycan (N-linked (GlcNAc...) asparagine) is linked at Asn-495. A helical membrane pass occupies residues Ile-511–Phe-531. Residues Arg-532–Arg-868 lie on the Cytoplasmic side of the membrane. The Protein kinase domain maps to Asn-563–Asn-832. Residues Leu-569 to Val-577 and Lys-590 each bind ATP. Tyr-635 is modified (phosphotyrosine). Residue Asp-687 is the Proton acceptor of the active site. Ser-721 is subject to Phosphoserine. Residues Thr-722 and Thr-727 each carry the phosphothreonine modification. Phosphotyrosine is present on Tyr-735.

Belongs to the protein kinase superfamily. Ser/Thr protein kinase family.

Its subcellular location is the cell membrane. It catalyses the reaction L-seryl-[protein] + ATP = O-phospho-L-seryl-[protein] + ADP + H(+). It carries out the reaction L-threonyl-[protein] + ATP = O-phospho-L-threonyl-[protein] + ADP + H(+). The chain is Leucine-rich repeat receptor-like serine/threonine-protein kinase At2g14510 from Arabidopsis thaliana (Mouse-ear cress).